We begin with the raw amino-acid sequence, 370 residues long: Queuine tRNA-ribosyltransferase (370 aa).

The active-site Proton acceptor is the Asp89. Residues 89-93 (DSGGF), Asp143, Gln185, and Gly212 contribute to the substrate site. Positions 243–249 (GVGTPED) are RNA binding. The Nucleophile role is filled by Asp262. The interval 267–271 (TRNAR) is RNA binding; important for wobble base 34 recognition. 4 residues coordinate Zn(2+): Cys300, Cys302, Cys305, and His331.

Belongs to the queuine tRNA-ribosyltransferase family. As to quaternary structure, homodimer. Within each dimer, one monomer is responsible for RNA recognition and catalysis, while the other monomer binds to the replacement base PreQ1. It depends on Zn(2+) as a cofactor.

The enzyme catalyses 7-aminomethyl-7-carbaguanine + guanosine(34) in tRNA = 7-aminomethyl-7-carbaguanosine(34) in tRNA + guanine. Its pathway is tRNA modification; tRNA-queuosine biosynthesis. Catalyzes the base-exchange of a guanine (G) residue with the queuine precursor 7-aminomethyl-7-deazaguanine (PreQ1) at position 34 (anticodon wobble position) in tRNAs with GU(N) anticodons (tRNA-Asp, -Asn, -His and -Tyr). Catalysis occurs through a double-displacement mechanism. The nucleophile active site attacks the C1' of nucleotide 34 to detach the guanine base from the RNA, forming a covalent enzyme-RNA intermediate. The proton acceptor active site deprotonates the incoming PreQ1, allowing a nucleophilic attack on the C1' of the ribose to form the product. After dissociation, two additional enzymatic reactions on the tRNA convert PreQ1 to queuine (Q), resulting in the hypermodified nucleoside queuosine (7-(((4,5-cis-dihydroxy-2-cyclopenten-1-yl)amino)methyl)-7-deazaguanosine). The polypeptide is Queuine tRNA-ribosyltransferase (Methylobacillus flagellatus (strain ATCC 51484 / DSM 6875 / VKM B-1610 / KT)).